The sequence spans 292 residues: Mitochondrial ornithine transporter 1 (292 aa).

Solcar repeat units lie at residues 11 to 97, 105 to 196, and 211 to 292; these read EGAI…CSKF, SPLG…VKKS, and SKIW…LSAL. A run of 6 helical transmembrane segments spans residues 14–34, 69–89, 104–124, 171–187, 213–233, and 267–287; these read ILDI…EFPF, FFQG…TLFV, VSPL…ASLV, GQSG…VAWF, IWEL…SIFP, and GLGI…YIFE.

This sequence belongs to the mitochondrial carrier (TC 2.A.29) family.

The protein resides in the mitochondrion inner membrane. Required for arginine biosynthesis. Transports ornithine synthesized from glutamate in the mitochondrial matrix to the cytosol, where it is converted to arginine. The protein is Mitochondrial ornithine transporter 1 (ORT1) of Saccharomyces cerevisiae (strain ATCC 204508 / S288c) (Baker's yeast).